The sequence spans 215 residues: UPF0502 protein Gbem_0102 (215 aa).

This sequence belongs to the UPF0502 family.

In Citrifermentans bemidjiense (strain ATCC BAA-1014 / DSM 16622 / JCM 12645 / Bem) (Geobacter bemidjiensis), this protein is UPF0502 protein Gbem_0102.